The primary structure comprises 226 residues: Purine nucleoside phosphorylase Cj1217c (226 aa).

Residues H58, C93, and H109 each contribute to the Zn(2+) site.

It belongs to the purine nucleoside phosphorylase YfiH/LACC1 family. As to quaternary structure, homodimer. It depends on Cu(2+) as a cofactor. The cofactor is Zn(2+).

It carries out the reaction adenosine + phosphate = alpha-D-ribose 1-phosphate + adenine. The enzyme catalyses S-methyl-5'-thioadenosine + phosphate = 5-(methylsulfanyl)-alpha-D-ribose 1-phosphate + adenine. It catalyses the reaction inosine + phosphate = alpha-D-ribose 1-phosphate + hypoxanthine. The catalysed reaction is adenosine + H2O + H(+) = inosine + NH4(+). In terms of biological role, purine nucleoside enzyme that catalyzes the phosphorolysis of adenosine and inosine nucleosides, yielding D-ribose 1-phosphate and the respective free bases, adenine and hypoxanthine. Also catalyzes the phosphorolysis of S-methyl-5'-thioadenosine into adenine and S-methyl-5-thio-alpha-D-ribose 1-phosphate. Also has adenosine deaminase activity. The sequence is that of Purine nucleoside phosphorylase Cj1217c from Campylobacter jejuni subsp. jejuni serotype O:2 (strain ATCC 700819 / NCTC 11168).